Reading from the N-terminus, the 396-residue chain is Phosphoglycerate kinase (396 aa).

Substrate-binding positions include D21–N23, R36, H59–R62, R118, and R151. ATP is bound by residues K201, G292, E323, and G349 to S352.

The protein belongs to the phosphoglycerate kinase family. As to quaternary structure, monomer.

It localises to the cytoplasm. The catalysed reaction is (2R)-3-phosphoglycerate + ATP = (2R)-3-phospho-glyceroyl phosphate + ADP. Its pathway is carbohydrate degradation; glycolysis; pyruvate from D-glyceraldehyde 3-phosphate: step 2/5. This chain is Phosphoglycerate kinase, found in Leptospira borgpetersenii serovar Hardjo-bovis (strain L550).